Reading from the N-terminus, the 92-residue chain is MRNYELVYVVKPNSDEEVREAILNKVKEVVATDGEIVKVDTWGTKKLAYPIAKFTEGFYVLVNFKSAVDVPKEIDRNLKINENVIRHMIVVA.

The protein belongs to the bacterial ribosomal protein bS6 family.

Binds together with bS18 to 16S ribosomal RNA. This chain is Small ribosomal subunit protein bS6, found in Clostridioides difficile (strain 630) (Peptoclostridium difficile).